The following is a 274-amino-acid chain: Glutamate--cysteine ligase regulatory subunit (274 aa).

A Phosphoserine modification is found at Ser59. Residue Lys263 is modified to N6-acetyllysine.

Belongs to the aldo/keto reductase family. Glutamate--cysteine ligase light chain subfamily. As to quaternary structure, heterodimer of a catalytic heavy chain and a regulatory light chain.

The protein operates within sulfur metabolism; glutathione biosynthesis; glutathione from L-cysteine and L-glutamate: step 1/2. In Bos taurus (Bovine), this protein is Glutamate--cysteine ligase regulatory subunit (GCLM).